A 207-amino-acid polypeptide reads, in one-letter code: Dephospho-CoA kinase (207 aa).

Positions 10 to 207 (ILGLTGGIGS…FYLTLRGGQS (198 aa)) constitute a DPCK domain. 18 to 23 (GSGKSA) provides a ligand contact to ATP.

The protein belongs to the CoaE family.

It is found in the cytoplasm. The catalysed reaction is 3'-dephospho-CoA + ATP = ADP + CoA + H(+). It functions in the pathway cofactor biosynthesis; coenzyme A biosynthesis; CoA from (R)-pantothenate: step 5/5. Catalyzes the phosphorylation of the 3'-hydroxyl group of dephosphocoenzyme A to form coenzyme A. The chain is Dephospho-CoA kinase from Pseudomonas syringae pv. syringae (strain B728a).